A 103-amino-acid chain; its full sequence is UPF0473 protein LVIS_1220 (103 aa).

Belongs to the UPF0473 family.

In Levilactobacillus brevis (strain ATCC 367 / BCRC 12310 / CIP 105137 / JCM 1170 / LMG 11437 / NCIMB 947 / NCTC 947) (Lactobacillus brevis), this protein is UPF0473 protein LVIS_1220.